Here is a 2281-residue protein sequence, read N- to C-terminus: Retinal-specific phospholipid-transporting ATPase ABCA4 (2281 aa).

At 1–24 the chain is on the cytoplasmic side; that stretch reads MGFARQIKLLLWKNWTLRKRQKIR. The helical transmembrane segment at 25 to 45 threads the bilayer; sequence FVVELVWPLSLFLVLIWLRNV. The Extracellular segment spans residues 46-646; that stretch reads NPLYSKHECH…MPYPCFVDDS (601 aa). Disulfide bonds link cysteine 54–cysteine 81 and cysteine 75–cysteine 324. Asparagine 98 carries an N-linked (GlcNAc...) asparagine glycan. Mg(2+) is bound by residues serine 336 and asparagine 338. The cysteines at positions 370 and 519 are disulfide-linked. N-linked (Hex...) asparagine glycosylation is found at asparagine 415 and asparagine 504. An N-all-trans-retinylidenephosphatidylethanolamine contacts are provided by arginine 587 and arginine 653. Intrachain disulfides connect cysteine 641-cysteine 1488, cysteine 1442-cysteine 1453, and cysteine 1486-cysteine 1500. The helical transmembrane segment at 647-667 threads the bilayer; the sequence is FMIILNRCFPIFMVLAWIYSV. At 668 to 699 the chain is on the cytoplasmic side; that stretch reads SMTVKSIVLEKELRLKETLKNQGVSNRVIWCT. A helical transmembrane segment spans residues 700 to 720; it reads WFLDSFSIMSMSICLLTIFIM. Residues 721-730 are Extracellular-facing; it reads HGRILHYSNP. The chain crosses the membrane as a helical span at residues 731 to 751; that stretch reads FILFLFLLAFSIATIMQCFLL. Residues 752–759 lie on the Cytoplasmic side of the membrane; it reads STFFSRAS. A helical transmembrane segment spans residues 760–780; that stretch reads LAAACSGVIYFTLYLPHILCF. At 781–835 the chain is on the extracellular side; it reads AWQDRITADMKMAVSLLSPVAFGFGTEYLARFEEQGVGLQWSNIGNSPMEGDEFS. A helical membrane pass occupies residues 836 to 856; the sequence is FLMSMKMMLLDAALYGLLAWY. Residues 857 to 1374 lie on the Cytoplasmic side of the membrane; sequence LDQVFPGDYG…IRSHKDFLAQ (518 aa). The residue at position 901 (threonine 901) is a Phosphothreonine. The region spanning 929–1160 is the ABC transporter 1 domain; that stretch reads VCVKNLVKIF…FGTGFYLTLV (232 aa). Positions 938, 966, and 969 each coordinate ATP. Threonine 970 contributes to the Mg(2+) binding site. Threonine 971, glutamine 1010, lysine 1054, glycine 1064, glycine 1065, and histidine 1118 together coordinate ATP. Phosphoserine is present on serine 1185. A disordered region spans residues 1295-1340; sequence ENINLRHPCSGPSEKAGQTPQGSSSHPREPAAHPEGQPPPEREGHS. The segment covering 1310-1319 has biased composition (polar residues); it reads AGQTPQGSSS. A Phosphothreonine modification is found at threonine 1313. Residues serine 1317 and serine 1319 each carry the phosphoserine modification. The helical transmembrane segment at 1375–1395 threads the bilayer; sequence IVLPATFVFLALMLSLIIPPF. Topologically, residues 1396–1679 are extracellular; it reads GEYPALTLHP…TVLTTSVDAV (284 aa). A glycan (N-linked (Hex...) asparagine) is linked at asparagine 1455. A glycan (N-linked (Hex...) asparagine) is linked at asparagine 1527. N-linked (GlcNAc...) asparagine glycosylation is present at asparagine 1586. N-linked (Hex...) asparagine glycosylation is present at asparagine 1660. The helical transmembrane segment at 1680–1700 threads the bilayer; sequence VAICVIFAMSFVPASFVLYLI. At 1701–1725 the chain is on the cytoplasmic side; sequence QERVNKAKHLQFVSGVSPTTYWLTN. Residues 1726–1746 traverse the membrane as a helical segment; the sequence is FLWDIMNYTVSAALVVGIFIG. The Extracellular segment spans residues 1747-1757; the sequence is FQKKAYTSSEN. Residues 1758 to 1778 form a helical membrane-spanning segment; the sequence is LPALVALLMLYGWAVIPMMYP. Topologically, residues 1779–1790 are cytoplasmic; the sequence is ASFLFDIPSTAY. Residues 1791-1811 form a helical membrane-spanning segment; that stretch reads VALSCANLFIGINSSAITFVL. Residues 1812 to 1829 are Extracellular-facing; that stretch reads ELFENNRTLLRINAMLRK. A glycan (N-linked (GlcNAc...) asparagine) is linked at asparagine 1817. A helical transmembrane segment spans residues 1830–1850; the sequence is LLIIFPHFCLGRGLIDLALSQ. Over 1851 to 1879 the chain is Cytoplasmic; sequence AVTDVYARFGEEHSSNPFQWDLIGKNLAA. Residues 1880-1900 form a helical membrane-spanning segment; sequence MAVEGVVYFLLTLLIQYQFFF. Residues 1901–2281 are Extracellular-facing; that stretch reads SRWTTEPAKE…VDKGNSAPQG (381 aa). The N-linked (GlcNAc...) asparagine glycan is linked to asparagine 1931. The 233-residue stretch at 1936–2168 folds into the ABC transporter 2 domain; it reads LRLNELTKVY…FGDGYIVTMK (233 aa). ATP contacts are provided by asparagine 1972, glycine 1973, lysine 1976, threonine 1977, and threonine 1978. Threonine 1977 provides a ligand contact to Mg(2+). Residues asparagine 2004 and asparagine 2050 are each glycosylated (N-linked (GlcNAc...) asparagine). ATP is bound at residue glycine 2071. Residues 2242-2247 form an essential for ATP binding and ATPase activity region; it reads VFVNFA. N-linked (GlcNAc...) asparagine glycosylation occurs at asparagine 2251. A disordered region spans residues 2262–2281; the sequence is AAGASRQAKEVDKGNSAPQG.

N-glycosylated. Post-translationally, proteolytic cleavage by trypsin leads to a 120-kDa N-terminal fragment and a 115-kDa C-terminal fragment that are linked through disulfide bonds. In terms of processing, phosphorylation is independent of light exposure and modulates ATPase activity. Expressed in retina namely in the periphery and incisures of the rod outer segments (ROS).

Its subcellular location is the membrane. It localises to the cell projection. The protein localises to the cilium. The protein resides in the photoreceptor outer segment. It is found in the cytoplasmic vesicle. Its subcellular location is the endoplasmic reticulum. It carries out the reaction ATP + H2O + phospholipidSide 1 = ADP + phosphate + phospholipidSide 2.. It catalyses the reaction an N-all-trans-retinylidenephosphatidylethanolamine(out) + ATP + H2O = an N-all-trans-retinylidenephosphatidylethanolamine(in) + ADP + phosphate + H(+). The catalysed reaction is a 1,2-diacyl-sn-glycero-3-phosphoethanolamine(out) + ATP + H2O = a 1,2-diacyl-sn-glycero-3-phosphoethanolamine(in) + ADP + phosphate + H(+). The enzyme catalyses N-11-cis-retinylidenephosphatidylethanolamine(out) + ATP + H2O = N-11-cis-retinylidenephosphatidylethanolamine(in) + ADP + phosphate + H(+). It carries out the reaction ATP + H2O = ADP + phosphate + H(+). All-trans-retinal transport activity is reduced by EDTA chelation of Mg2+. All-trans-retinal transport activity is inhibited by N-ethylmaleimide (NEM). Phosphatidylethanolamine transport is strongly inhibited by beryllium fluoride and NEM. Functionally, flippase that catalyzes in an ATP-dependent manner the transport of retinal-phosphatidylethanolamine conjugates like the 11-cis and all-trans isomers of N-retinylidene-phosphatidylethanolamine from the lumen to the cytoplasmic leaflet of photoreceptor outer segment disk membranes, where N-cis-retinylidene-phosphatidylethanolamine (N-cis-R-PE) is then isomerized to its all-trans isomer (N-trans-R-PE) and reduced by RDH8 to produce all-trans-retinol (all-trans-rol) and therefore prevents the accumulation of excess of 11-cis-retinal and its schiff-base conjugate and the formation of toxic bisretinoid. Displays both ATPase and GTPase activity that is strongly influenced by the lipid environment and the presence of retinoid compounds. Binds the unprotonated form of N-retinylidene-phosphatidylethanolamine with high affinity in the absence of ATP and ATP binding and hydrolysis induce a protein conformational change that causes the dissociation of N-retinylidene-phosphatidylethanolamine. This is Retinal-specific phospholipid-transporting ATPase ABCA4 from Bos taurus (Bovine).